Here is a 73-residue protein sequence, read N- to C-terminus: MKKDIHPDYHFIDVKMTDGTVVKMRSTWGNEGDQLALDIDPSAHPAWTGGSSRLMDTGGRVSKFKKKYEGLGF.

This sequence belongs to the bacterial ribosomal protein bL31 family. Type A subfamily. Part of the 50S ribosomal subunit.

Binds the 23S rRNA. This is Large ribosomal subunit protein bL31 from Ruegeria sp. (strain TM1040) (Silicibacter sp.).